The following is a 376-amino-acid chain: Succinyl-diaminopimelate desuccinylase (376 aa).

Residue H66 coordinates Zn(2+). D68 is a catalytic residue. D99 is a Zn(2+) binding site. E133 functions as the Proton acceptor in the catalytic mechanism. Positions 134, 162, and 349 each coordinate Zn(2+).

Belongs to the peptidase M20A family. DapE subfamily. Homodimer. Zn(2+) is required as a cofactor. The cofactor is Co(2+).

The enzyme catalyses N-succinyl-(2S,6S)-2,6-diaminopimelate + H2O = (2S,6S)-2,6-diaminopimelate + succinate. The protein operates within amino-acid biosynthesis; L-lysine biosynthesis via DAP pathway; LL-2,6-diaminopimelate from (S)-tetrahydrodipicolinate (succinylase route): step 3/3. Its function is as follows. Catalyzes the hydrolysis of N-succinyl-L,L-diaminopimelic acid (SDAP), forming succinate and LL-2,6-diaminopimelate (DAP), an intermediate involved in the bacterial biosynthesis of lysine and meso-diaminopimelic acid, an essential component of bacterial cell walls. The sequence is that of Succinyl-diaminopimelate desuccinylase from Buchnera aphidicola subsp. Cinara cedri (strain Cc).